The sequence spans 145 residues: Oleosin L (145 aa).

A2 carries the N-acetylalanine modification. 2 helical membrane passes run 36-56 (GSLL…LTIA) and 59-79 (LLVI…LLGA). The Proline-knot motif lies at 58–69 (PLLVIFSPVLVP). The segment covering 123 to 132 (KAREMKDRAE) has biased composition (basic and acidic residues). Positions 123–145 (KAREMKDRAEQFSQQPVAGSQTS) are disordered. Residues 133–145 (QFSQQPVAGSQTS) show a composition bias toward polar residues.

It belongs to the oleosin family. As to expression, expressed in seeds (at protein level).

The protein localises to the lipid droplet. It localises to the membrane. Its function is as follows. May have a structural role to stabilize the lipid body during desiccation of the seed by preventing coalescence of the oil. Probably interacts with both lipid and phospholipid moieties of lipid bodies. May also provide recognition signals for specific lipase anchorage in lipolysis during seedling growth. The polypeptide is Oleosin L (Sesamum indicum (Oriental sesame)).